The chain runs to 313 residues: Protein TIFY 4A (313 aa).

Residues 118-149 (SPRSAEFSGGSGHFVSEKDGHKTTISPRSPAE) are disordered. One can recognise a Tify domain in the interval 150-185 (TSELVGQMTIFYSGKVNVYDGIPPEKARSIMHFAAN). Disordered regions lie at residues 220–256 (KANSSRDSGMEGQANRKVSLQRYREKRKDRKFSKAKK) and 281–313 (QNLGCTGSPLHSQSPESQTKSPNLSVDLNSEGI). A Jas motif is present at residues 232 to 254 (QANRKVSLQRYREKRKDRKFSKA). Residues 234 to 241 (NRKVSLQR) carry the Nuclear localization signal motif. Over residues 243–256 (REKRKDRKFSKAKK) the composition is skewed to basic residues.

This sequence belongs to the TIFY/JAZ family. In terms of assembly, interacts with AFPH2/NINJA.

The protein localises to the nucleus. In terms of biological role, regulates the arrest of dispersed meristematic cells during lamina development. The polypeptide is Protein TIFY 4A (TIFY4A) (Arabidopsis thaliana (Mouse-ear cress)).